The sequence spans 343 residues: Thioredoxin domain-containing protein 15 (343 aa).

The first 20 residues, 1-20, serve as a signal peptide directing secretion; it reads MQLLCWWQILLWVLGLPARG. The Extracellular segment spans residues 21-304; sequence LEEDSGHTWQ…GPLPSTLVKT (284 aa). Over residues 86 to 95 the composition is skewed to basic and acidic residues; sequence EDQRSTEAHD. The tract at residues 86-112 is disordered; sequence EDQRSTEAHDGTCSAQGDEDPRCGGRE. The 118-residue stretch at 162–279 folds into the Thioredoxin domain; that stretch reads ERNVTGLENF…LKIFIFNQTG (118 aa). 4 N-linked (GlcNAc...) asparagine glycosylation sites follow: asparagine 170, asparagine 177, asparagine 189, and asparagine 276. Residues 305–325 traverse the membrane as a helical segment; sequence VDWLLVFSLFFLISFIMYATI. The Cytoplasmic portion of the chain corresponds to 326–343; the sequence is RTESIRWLIPGQEQEHAE.

It is found in the cell projection. It localises to the cilium membrane. Functionally, acts as a positive regulator of ciliary hedgehog signaling. Required for cilia biogenesis. The chain is Thioredoxin domain-containing protein 15 (Txndc15) from Rattus norvegicus (Rat).